The primary structure comprises 171 residues: Co-chaperone protein HscB homolog (171 aa).

The region spanning 2 to 74 (NYFELFGLPI…LRRAEYLLSL (73 aa)) is the J domain.

The protein belongs to the HscB family. In terms of assembly, interacts with HscA and stimulates its ATPase activity.

Its function is as follows. Co-chaperone involved in the maturation of iron-sulfur cluster-containing proteins. Seems to help targeting proteins to be folded toward HscA. The sequence is that of Co-chaperone protein HscB homolog from Vibrio cholerae serotype O1 (strain M66-2).